Reading from the N-terminus, the 152-residue chain is Large ribosomal subunit protein uL13 (152 aa).

It belongs to the universal ribosomal protein uL13 family. As to quaternary structure, part of the 50S ribosomal subunit.

This protein is one of the early assembly proteins of the 50S ribosomal subunit, although it is not seen to bind rRNA by itself. It is important during the early stages of 50S assembly. This Wolbachia pipientis subsp. Culex pipiens (strain wPip) protein is Large ribosomal subunit protein uL13.